The primary structure comprises 146 residues: Hemoglobin subunit beta-2 (146 aa).

Val-1 bears the N-acetylvaline mark. The 145-residue stretch at 2-146 folds into the Globin domain; that stretch reads HLHGDEKAAV…VASALAHKYH (145 aa). Position 17 is an N6-succinyllysine (Lys-17). Residue Ser-44 is modified to Phosphoserine. Position 59 is an N6-succinyllysine (Lys-59). Heme b-binding residues include His-63 and His-92. Arg-104 is modified (asymmetric dimethylarginine). Phosphothreonine is present on Thr-123.

Belongs to the globin family. In terms of assembly, heterotetramer of two alpha chains and two beta chains. As to expression, red blood cells.

Functionally, involved in oxygen transport from the lung to the various peripheral tissues. In Tapirus terrestris (Lowland tapir), this protein is Hemoglobin subunit beta-2 (HBB2).